The sequence spans 218 residues: UPF0502 protein CJA_1529 (218 aa).

It belongs to the UPF0502 family.

The polypeptide is UPF0502 protein CJA_1529 (Cellvibrio japonicus (strain Ueda107) (Pseudomonas fluorescens subsp. cellulosa)).